The sequence spans 210 residues: Scoloptoxin SSD976 (210 aa).

An N-terminal signal peptide occupies residues 1–23; it reads MNILLSSTLFVLLMFQIIGSGMG.

Post-translationally, contains 3 disulfide bonds. Expressed by the venom gland.

It is found in the secreted. Its function is as follows. Voltage-gated calcium channel inhibitor. This is Scoloptoxin SSD976 from Scolopendra dehaani (Thai centipede).